The following is a 179-amino-acid chain: Large ribosomal subunit protein uL6 (179 aa).

This sequence belongs to the universal ribosomal protein uL6 family. Part of the 50S ribosomal subunit.

Functionally, this protein binds to the 23S rRNA, and is important in its secondary structure. It is located near the subunit interface in the base of the L7/L12 stalk, and near the tRNA binding site of the peptidyltransferase center. The sequence is that of Large ribosomal subunit protein uL6 from Syntrophotalea carbinolica (strain DSM 2380 / NBRC 103641 / GraBd1) (Pelobacter carbinolicus).